Reading from the N-terminus, the 603-residue chain is Trihelix transcription factor DF1 (603 aa).

The region spanning 60–118 (NRWPRQETLALLKIRSDMGIAFRDASVKGPLWEEVSRKMAEHGYIRNAKKCKEKFENVY) is the Myb-like 1 domain. Disordered regions lie at residues 149-201 (QSTT…SSIP), 220-249 (LSDN…TRKK), 333-408 (KQPN…SSSR), and 532-603 (QWPP…TNNL). 4 stretches are compositionally biased toward low complexity: residues 168 to 178 (NNNNNNNNNNN), 189 to 198 (TTVMPTLPSS), 221 to 236 (SDNS…TSSD), and 344 to 362 (PQQV…QQPP). A compositionally biased stretch (pro residues) spans 363-376 (QRSPPPQPPAPLPQ). Over residues 381–408 (VVSTLDTTKTDNGGDQNMTPAASASSSR) the composition is skewed to polar residues. A Myb-like 2 domain is found at 401–465 (AASASSSRWP…RCKEKWENIN (65 aa)). The span at 532-555 (QWPPAVTTATTTPAAAQPDQQSQP) shows a compositional bias: low complexity. Acidic residues predominate over residues 559-586 (NFDDEEGTDEEYDDEDEEEENEEEEGGE). Positions 593–603 (NNNNNKTTNNL) are enriched in low complexity.

The protein localises to the nucleus. Its function is as follows. Transcription repressor that negatively regulates root hair growth by directly binding RSL4 promoter and repressing RSL4 expression. Required for the synthesis of seed coat mucilage. The chain is Trihelix transcription factor DF1 from Arabidopsis thaliana (Mouse-ear cress).